The chain runs to 449 residues: Bifunctional protein GlmU (449 aa).

A pyrophosphorylase region spans residues 1–229 (MKLSAVILAA…EEDIYGINDR (229 aa)). UDP-N-acetyl-alpha-D-glucosamine contacts are provided by residues 8–11 (LAAG), Lys22, Gln73, and 78–79 (GT). Position 102 (Asp102) interacts with Mg(2+). The UDP-N-acetyl-alpha-D-glucosamine site is built by Gly139, Glu154, Asn169, and Asn227. Mg(2+) is bound at residue Asn227. The interval 230 to 250 (VQLAQAENILRQRKNRELMLS) is linker. The interval 251–449 (GVSLMDPAST…AGQKHLPRKG (199 aa)) is N-acetyltransferase. Positions 332 and 350 each coordinate UDP-N-acetyl-alpha-D-glucosamine. His362 (proton acceptor) is an active-site residue. Tyr365 and Asn376 together coordinate UDP-N-acetyl-alpha-D-glucosamine. Acetyl-CoA is bound by residues Ala379, 385-386 (NY), Ser404, Ala422, and Arg439.

In the N-terminal section; belongs to the N-acetylglucosamine-1-phosphate uridyltransferase family. It in the C-terminal section; belongs to the transferase hexapeptide repeat family. As to quaternary structure, homotrimer. Mg(2+) is required as a cofactor.

The protein resides in the cytoplasm. It catalyses the reaction alpha-D-glucosamine 1-phosphate + acetyl-CoA = N-acetyl-alpha-D-glucosamine 1-phosphate + CoA + H(+). The catalysed reaction is N-acetyl-alpha-D-glucosamine 1-phosphate + UTP + H(+) = UDP-N-acetyl-alpha-D-glucosamine + diphosphate. Its pathway is nucleotide-sugar biosynthesis; UDP-N-acetyl-alpha-D-glucosamine biosynthesis; N-acetyl-alpha-D-glucosamine 1-phosphate from alpha-D-glucosamine 6-phosphate (route II): step 2/2. The protein operates within nucleotide-sugar biosynthesis; UDP-N-acetyl-alpha-D-glucosamine biosynthesis; UDP-N-acetyl-alpha-D-glucosamine from N-acetyl-alpha-D-glucosamine 1-phosphate: step 1/1. It participates in bacterial outer membrane biogenesis; LPS lipid A biosynthesis. Functionally, catalyzes the last two sequential reactions in the de novo biosynthetic pathway for UDP-N-acetylglucosamine (UDP-GlcNAc). The C-terminal domain catalyzes the transfer of acetyl group from acetyl coenzyme A to glucosamine-1-phosphate (GlcN-1-P) to produce N-acetylglucosamine-1-phosphate (GlcNAc-1-P), which is converted into UDP-GlcNAc by the transfer of uridine 5-monophosphate (from uridine 5-triphosphate), a reaction catalyzed by the N-terminal domain. The protein is Bifunctional protein GlmU of Syntrophomonas wolfei subsp. wolfei (strain DSM 2245B / Goettingen).